The following is a 290-amino-acid chain: Signal recognition particle receptor subunit beta (290 aa).

A helical transmembrane segment spans residues 44 to 64; that stretch reads VLLLALFTLIFIIIISKLFGS. Residues 92 to 100, 114 to 117, G140, and A268 each bind GTP; these read GLSNAGKTA and THTS.

This sequence belongs to the SRP receptor beta subunit family. In terms of assembly, heterodimer of an alpha and a beta chain.

It localises to the endoplasmic reticulum membrane. Component of the signal recognition particle (SRP) complex receptor (SR). Ensures, in conjunction with the SRP complex, the correct targeting of the nascent secretory proteins to the endoplasmic reticulum membrane system. May mediate the membrane association of SR. This Dictyostelium discoideum (Social amoeba) protein is Signal recognition particle receptor subunit beta (srprb).